A 591-amino-acid chain; its full sequence is Probable translation initiation factor IF-2 (591 aa).

Residues 7-223 enclose the tr-type G domain; that stretch reads LRTPIVCVMG…LLGLAQKFLE (217 aa). Residues 16–23 form a G1 region; the sequence is GHVDHGKT. GTP is bound at residue 16–23; that stretch reads GHVDHGKT. The tract at residues 41 to 45 is G2; that stretch reads AITQH. A G3 region spans residues 78–81; the sequence is DTPG. Residues 78 to 82 and 132 to 135 each bind GTP; these read DTPGH and NKID. The interval 132–135 is G4; sequence NKID. The G5 stretch occupies residues 200 to 202; it reads SAF.

It belongs to the TRAFAC class translation factor GTPase superfamily. Classic translation factor GTPase family. IF-2 subfamily.

Function in general translation initiation by promoting the binding of the formylmethionine-tRNA to ribosomes. Seems to function along with eIF-2. The polypeptide is Probable translation initiation factor IF-2 (Methanosarcina mazei (strain ATCC BAA-159 / DSM 3647 / Goe1 / Go1 / JCM 11833 / OCM 88) (Methanosarcina frisia)).